The sequence spans 129 residues: NADPH-dependent 7-cyano-7-deazaguanine reductase (129 aa).

Cys42 serves as the catalytic Thioimide intermediate. The active-site Proton donor is Asp49. Residues 64-66 (VEL) and 83-84 (HE) contribute to the substrate site.

Belongs to the GTP cyclohydrolase I family. QueF type 1 subfamily.

The protein localises to the cytoplasm. The enzyme catalyses 7-aminomethyl-7-carbaguanine + 2 NADP(+) = 7-cyano-7-deazaguanine + 2 NADPH + 3 H(+). Its pathway is tRNA modification; tRNA-queuosine biosynthesis. In terms of biological role, catalyzes the NADPH-dependent reduction of 7-cyano-7-deazaguanine (preQ0) to 7-aminomethyl-7-deazaguanine (preQ1). This is NADPH-dependent 7-cyano-7-deazaguanine reductase from Synechococcus sp. (strain CC9605).